Consider the following 65-residue polypeptide: Large ribosomal subunit protein bL32 (65 aa).

This sequence belongs to the bacterial ribosomal protein bL32 family.

The protein is Large ribosomal subunit protein bL32 (rpmF) of Rickettsia prowazekii (strain Madrid E).